The chain runs to 540 residues: CUB domain-containing protein 2 (540 aa).

The signal sequence occupies residues 1–22 (MLAEWGACLLLAVALLGPGLQA). Residues 23-516 (QAMEGVKCGG…VSMVAQDTSD (494 aa)) are Extracellular-facing. Disulfide bonds link C30–C56, C83–C106, C145–C171, C198–C218, C257–C283, and C314–C336. CUB domains lie at 30-143 (CGGV…YQKD), 145-255 (CGGV…YFSG), and 257-373 (CQEV…YIGV). N40 carries an N-linked (GlcNAc...) asparagine glycan. Residue N267 is glycosylated (N-linked (GlcNAc...) asparagine). N377, N435, and N436 each carry an N-linked (GlcNAc...) asparagine glycan. The chain crosses the membrane as a helical span at residues 517–537 (IVFLGLCILAGILMVIAIVVL). Over 538 to 540 (MLL) the chain is Cytoplasmic.

It is found in the membrane. This chain is CUB domain-containing protein 2 (CDCP2), found in Homo sapiens (Human).